A 307-amino-acid chain; its full sequence is 4-hydroxythreonine-4-phosphate dehydrogenase (307 aa).

The substrate site is built by histidine 126 and threonine 127. 3 residues coordinate a divalent metal cation: histidine 156, histidine 195, and histidine 251. Lysine 259, asparagine 268, and arginine 277 together coordinate substrate.

It belongs to the PdxA family. As to quaternary structure, homodimer. Zn(2+) serves as cofactor. Requires Mg(2+) as cofactor. The cofactor is Co(2+).

The protein localises to the cytoplasm. The catalysed reaction is 4-(phosphooxy)-L-threonine + NAD(+) = 3-amino-2-oxopropyl phosphate + CO2 + NADH. It functions in the pathway cofactor biosynthesis; pyridoxine 5'-phosphate biosynthesis; pyridoxine 5'-phosphate from D-erythrose 4-phosphate: step 4/5. In terms of biological role, catalyzes the NAD(P)-dependent oxidation of 4-(phosphooxy)-L-threonine (HTP) into 2-amino-3-oxo-4-(phosphooxy)butyric acid which spontaneously decarboxylates to form 3-amino-2-oxopropyl phosphate (AHAP). This is 4-hydroxythreonine-4-phosphate dehydrogenase from Helicobacter pylori (strain P12).